A 454-amino-acid polypeptide reads, in one-letter code: Bifunctional protein GlmU (454 aa).

The tract at residues Met1 to Pro228 is pyrophosphorylase. UDP-N-acetyl-alpha-D-glucosamine is bound by residues Leu10–Gly13, Lys24, Gln76, Gly81–Thr82, Tyr103–Asp105, Gly138, Glu153, Asn168, and Asn226. Asp105 contributes to the Mg(2+) binding site. Asn226 serves as a coordination point for Mg(2+). The interval Trp229–Gln249 is linker. Residues Gly250–Lys454 form an N-acetyltransferase region. 2 residues coordinate UDP-N-acetyl-alpha-D-glucosamine: Arg332 and Lys350. His362 serves as the catalytic Proton acceptor. Residues Tyr365 and Asn376 each coordinate UDP-N-acetyl-alpha-D-glucosamine. Acetyl-CoA is bound by residues Ala379, Asn385 to Tyr386, Ser404, Ala422, and Arg439.

It in the N-terminal section; belongs to the N-acetylglucosamine-1-phosphate uridyltransferase family. This sequence in the C-terminal section; belongs to the transferase hexapeptide repeat family. Homotrimer. Mg(2+) is required as a cofactor.

The protein resides in the cytoplasm. It catalyses the reaction alpha-D-glucosamine 1-phosphate + acetyl-CoA = N-acetyl-alpha-D-glucosamine 1-phosphate + CoA + H(+). The catalysed reaction is N-acetyl-alpha-D-glucosamine 1-phosphate + UTP + H(+) = UDP-N-acetyl-alpha-D-glucosamine + diphosphate. It participates in nucleotide-sugar biosynthesis; UDP-N-acetyl-alpha-D-glucosamine biosynthesis; N-acetyl-alpha-D-glucosamine 1-phosphate from alpha-D-glucosamine 6-phosphate (route II): step 2/2. Its pathway is nucleotide-sugar biosynthesis; UDP-N-acetyl-alpha-D-glucosamine biosynthesis; UDP-N-acetyl-alpha-D-glucosamine from N-acetyl-alpha-D-glucosamine 1-phosphate: step 1/1. It functions in the pathway bacterial outer membrane biogenesis; LPS lipid A biosynthesis. In terms of biological role, catalyzes the last two sequential reactions in the de novo biosynthetic pathway for UDP-N-acetylglucosamine (UDP-GlcNAc). The C-terminal domain catalyzes the transfer of acetyl group from acetyl coenzyme A to glucosamine-1-phosphate (GlcN-1-P) to produce N-acetylglucosamine-1-phosphate (GlcNAc-1-P), which is converted into UDP-GlcNAc by the transfer of uridine 5-monophosphate (from uridine 5-triphosphate), a reaction catalyzed by the N-terminal domain. The sequence is that of Bifunctional protein GlmU from Xanthomonas euvesicatoria pv. vesicatoria (strain 85-10) (Xanthomonas campestris pv. vesicatoria).